A 636-amino-acid polypeptide reads, in one-letter code: Probable potassium transport system protein Kup (636 aa).

Helical transmembrane passes span 23–43, 63–83, 114–134, 150–170, 182–202, 217–237, 260–280, 298–318, 350–370, 379–399, 407–427, and 432–452; these read LVIGAIGVVFGDIGTSPLYSL, IISLLFWAMTIVVSIKYVVFV, VLMMLGIFGACMFYGDAVITP, PQLSRFVIPITLVILVALFLI, FGPVMVVWFVTLGLLGLYNLV, ISFLIAHSLQAFIVLGSVFLV, WFVLVMPCLILNYFGQGAMLL, LLIPMVVLATCATVIASQAVI, IYLPVINWILLVLVVAVVISF, AYGIAVTTTMVITTFLAAVVM, PALVTLLGLSFLLVDLAFFAA, and VAEGGWFPLLLGSTAFFLLMT.

Belongs to the HAK/KUP transporter (TC 2.A.72) family.

The protein localises to the cell inner membrane. It catalyses the reaction K(+)(in) + H(+)(in) = K(+)(out) + H(+)(out). Transport of potassium into the cell. Likely operates as a K(+):H(+) symporter. The chain is Probable potassium transport system protein Kup from Cupriavidus pinatubonensis (strain JMP 134 / LMG 1197) (Cupriavidus necator (strain JMP 134)).